A 271-amino-acid chain; its full sequence is Ubiquitin thioesterase OTUB1 (271 aa).

At A2 the chain carries N-acetylalanine. S16 carries the phosphoserine modification. Y26 is subject to Phosphotyrosine; by SRC. The OTU domain occupies 80-271 (SYIRKTRPDG…RPGHYDILYK (192 aa)). Residue D88 is part of the active site. Catalysis depends on C91, which acts as the Nucleophile. Ubiquitin-conjugating enzyme E2 binding regions lie at residues 130–138 (FTEFTIEDF) and 169–177 (DYLVVYLRL). Residues 189–195 (FFEHFIE) are free ubiquitin binding. Residues 206–213 (QEVEPMCK) are ubiquitin-conjugating enzyme E2 binding. Free ubiquitin binding stretches follow at residues 214 to 221 (ESDHIHII) and 245 to 251 (NPHIFPE). Residue H265 is part of the active site.

It belongs to the peptidase C65 family. As to quaternary structure, interacts with FUS and RACK1. Interacts with UBE2D1/UBCH5A, UBE2W/UBC16 and UBE2N/UBC13. In terms of assembly, interacts with RNF128. Forms a ternary complex with RNF128 and USP8. Interacts with the C-terminal UCH catalytic domain of USP8. Interacts with RNF128. Does not associate with USP8. Post-translationally, phosphorylation at Tyr-26 by SRC and SRMS promotes deubiquitination of RPTOR via a non-catalytic process. As to expression, isoform 1 is ubiquitous. Isoform 2 is expressed only in lymphoid tissues such as tonsils, lymph nodes and spleen, as well as peripheral blood mononuclear cells.

The protein resides in the cytoplasm. It catalyses the reaction Thiol-dependent hydrolysis of ester, thioester, amide, peptide and isopeptide bonds formed by the C-terminal Gly of ubiquitin (a 76-residue protein attached to proteins as an intracellular targeting signal).. By free ubiquitin: binding of free ubiquitin triggers conformational changes in the OTU domain and formation of a ubiquitin-binding helix in the N-terminus, promoting binding of the conjugated donor ubiquitin in UBE2N/UBC13 to OTUB1. Functionally, hydrolase that can specifically remove 'Lys-48'-linked conjugated ubiquitin from proteins and plays an important regulatory role at the level of protein turnover by preventing degradation. Regulator of T-cell anergy, a phenomenon that occurs when T-cells are rendered unresponsive to antigen rechallenge and no longer respond to their cognate antigen. Acts via its interaction with RNF128/GRAIL, a crucial inductor of CD4 T-cell anergy. Isoform 1 destabilizes RNF128, leading to prevent anergy. In contrast, isoform 2 stabilizes RNF128 and promotes anergy. Surprisingly, it regulates RNF128-mediated ubiquitination, but does not deubiquitinate polyubiquitinated RNF128. Deubiquitinates estrogen receptor alpha (ESR1). Mediates deubiquitination of 'Lys-48'-linked polyubiquitin chains, but not 'Lys-63'-linked polyubiquitin chains. Not able to cleave di-ubiquitin. Also capable of removing NEDD8 from NEDD8 conjugates, but with a much lower preference compared to 'Lys-48'-linked ubiquitin. In terms of biological role, plays a key non-catalytic role in DNA repair regulation by inhibiting activity of RNF168, an E3 ubiquitin-protein ligase that promotes accumulation of 'Lys-63'-linked histone H2A and H2AX at DNA damage sites. Inhibits RNF168 independently of ubiquitin thioesterase activity by binding and inhibiting UBE2N/UBC13, the E2 partner of RNF168, thereby limiting spreading of 'Lys-63'-linked histone H2A and H2AX marks. Inhibition occurs by binding to free ubiquitin: free ubiquitin acts as an allosteric regulator that increases affinity for UBE2N/UBC13 and disrupts interaction with UBE2V1. The OTUB1-UBE2N/UBC13-free ubiquitin complex adopts a configuration that mimics a cleaved 'Lys48'-linked di-ubiquitin chain. Acts as a regulator of mTORC1 and mTORC2 complexes. When phosphorylated at Tyr-26, acts as an activator of the mTORC1 complex by mediating deubiquitination of RPTOR via a non-catalytic process: acts by binding and inhibiting the activity of the ubiquitin-conjugating enzyme E2 (UBE2D1/UBCH5A, UBE2W/UBC16 and UBE2N/UBC13), thereby preventing ubiquitination of RPTOR. Can also act as an inhibitor of the mTORC1 and mTORC2 complexes in response to amino acids by mediating non-catalytic deubiquitination of DEPTOR. This chain is Ubiquitin thioesterase OTUB1 (OTUB1), found in Homo sapiens (Human).